We begin with the raw amino-acid sequence, 298 residues long: Lipoyl synthase (298 aa).

[4Fe-4S] cluster is bound by residues cysteine 40, cysteine 45, cysteine 51, cysteine 67, cysteine 71, cysteine 74, and serine 280. Positions 53–269 constitute a Radical SAM core domain; it reads AVRRTATFMI…KEIALSKGFS (217 aa).

Belongs to the radical SAM superfamily. Lipoyl synthase family. [4Fe-4S] cluster serves as cofactor.

It localises to the cytoplasm. It catalyses the reaction [[Fe-S] cluster scaffold protein carrying a second [4Fe-4S](2+) cluster] + N(6)-octanoyl-L-lysyl-[protein] + 2 oxidized [2Fe-2S]-[ferredoxin] + 2 S-adenosyl-L-methionine + 4 H(+) = [[Fe-S] cluster scaffold protein] + N(6)-[(R)-dihydrolipoyl]-L-lysyl-[protein] + 4 Fe(3+) + 2 hydrogen sulfide + 2 5'-deoxyadenosine + 2 L-methionine + 2 reduced [2Fe-2S]-[ferredoxin]. Its pathway is protein modification; protein lipoylation via endogenous pathway; protein N(6)-(lipoyl)lysine from octanoyl-[acyl-carrier-protein]. Its function is as follows. Catalyzes the radical-mediated insertion of two sulfur atoms into the C-6 and C-8 positions of the octanoyl moiety bound to the lipoyl domains of lipoate-dependent enzymes, thereby converting the octanoylated domains into lipoylated derivatives. This chain is Lipoyl synthase, found in Geobacillus thermodenitrificans (strain NG80-2).